The primary structure comprises 200 residues: Peptidyl-tRNA hydrolase (200 aa).

Residue Tyr17 coordinates tRNA. The active-site Proton acceptor is His22. TRNA is bound by residues Tyr78, Asn80, and Asn126.

This sequence belongs to the PTH family. In terms of assembly, monomer.

The protein localises to the cytoplasm. The catalysed reaction is an N-acyl-L-alpha-aminoacyl-tRNA + H2O = an N-acyl-L-amino acid + a tRNA + H(+). Functionally, hydrolyzes ribosome-free peptidyl-tRNAs (with 1 or more amino acids incorporated), which drop off the ribosome during protein synthesis, or as a result of ribosome stalling. Catalyzes the release of premature peptidyl moieties from peptidyl-tRNA molecules trapped in stalled 50S ribosomal subunits, and thus maintains levels of free tRNAs and 50S ribosomes. The sequence is that of Peptidyl-tRNA hydrolase from Cutibacterium acnes (strain DSM 16379 / KPA171202) (Propionibacterium acnes).